The chain runs to 1093 residues: TATA element modulatory factor (1093 aa).

Disordered regions lie at residues 38–80 (WAET…SPKA) and 108–189 (TIQK…DMKV). The segment covering 51 to 70 (SPVSGGWDTSTWGLKSNTEP) has biased composition (polar residues). Residues S72, S77, S112, and S136 each carry the phosphoserine modification. The segment covering 123–137 (QRPEEEVKSSLHESL) has biased composition (basic and acidic residues). Positions 139–158 (IGQSRTPETTESQVKDSSLC) are enriched in polar residues. The span at 173–187 (TEGKHEETVNKESDM) shows a compositional bias: basic and acidic residues. Residues S199 and S217 each carry the phosphoserine modification. Basic and acidic residues predominate over residues 229–238 (PKEQKHEDRQ). Disordered regions lie at residues 229–260 (PKEQ…SDIE) and 266–285 (SVIS…SKSS). A compositionally biased stretch (low complexity) spans 246-257 (VSTFSSGTSTTS). Residues S328, S330, S333, S338, S344, S413, S542, S925, and S928 each carry the phosphoserine modification. Positions 333 to 342 (SLDSRSVSEI) are interaction with Elongin BC complex. Residues 439–922 (EALSEKEDVC…QETIKEKERK (484 aa)) adopt a coiled-coil conformation. A disordered region spans residues 919 to 939 (KERKPFSVSSTPTMSRSSSIS). Over residues 925 to 939 (SVSSTPTMSRSSSIS) the composition is skewed to low complexity. T929 bears the Phosphothreonine mark. S933 carries the phosphoserine modification. Residues 984 to 1092 (SIIENLQSQL…QIDELLRQSL (109 aa)) adopt a coiled-coil conformation.

Interacts with TRNP1; may regulate TRNP1 proteasomal degradation. Component of the SNF/SWI transcription factor complexes. Interacts with RAB6A. Interacts with STAT3 and FER. Interacts with TCEB1. In terms of processing, phosphorylated by FER.

It localises to the cytoplasm. The protein localises to the nucleus. The protein resides in the golgi apparatus membrane. Potential coactivator of the androgen receptor. Mediates STAT3 degradation. May play critical roles in two RAB6-dependent retrograde transport processes: one from endosomes to the Golgi and the other from the Golgi to the ER. This protein binds the HIV-1 TATA element and inhibits transcriptional activation by the TATA-binding protein (TBP). The sequence is that of TATA element modulatory factor (TMF1) from Homo sapiens (Human).